The following is a 329-amino-acid chain: 4-hydroxy-3-methylbut-2-enyl diphosphate reductase 1 (329 aa).

Cys29 contributes to the [4Fe-4S] cluster binding site. 2 residues coordinate (2E)-4-hydroxy-3-methylbut-2-enyl diphosphate: His58 and His95. Dimethylallyl diphosphate is bound by residues His58 and His95. Residues His58 and His95 each contribute to the isopentenyl diphosphate site. A [4Fe-4S] cluster-binding site is contributed by Cys117. His145 provides a ligand contact to (2E)-4-hydroxy-3-methylbut-2-enyl diphosphate. Residue His145 participates in dimethylallyl diphosphate binding. Residue His145 participates in isopentenyl diphosphate binding. The active-site Proton donor is the Glu147. Residue Thr185 coordinates (2E)-4-hydroxy-3-methylbut-2-enyl diphosphate. Cys215 is a [4Fe-4S] cluster binding site. 4 residues coordinate (2E)-4-hydroxy-3-methylbut-2-enyl diphosphate: Ser243, Ser244, Asn245, and Ser287. Residues Ser243, Ser244, Asn245, and Ser287 each contribute to the dimethylallyl diphosphate site. Ser243, Ser244, Asn245, and Ser287 together coordinate isopentenyl diphosphate.

It belongs to the IspH family. Requires [4Fe-4S] cluster as cofactor.

It catalyses the reaction isopentenyl diphosphate + 2 oxidized [2Fe-2S]-[ferredoxin] + H2O = (2E)-4-hydroxy-3-methylbut-2-enyl diphosphate + 2 reduced [2Fe-2S]-[ferredoxin] + 2 H(+). The catalysed reaction is dimethylallyl diphosphate + 2 oxidized [2Fe-2S]-[ferredoxin] + H2O = (2E)-4-hydroxy-3-methylbut-2-enyl diphosphate + 2 reduced [2Fe-2S]-[ferredoxin] + 2 H(+). The protein operates within isoprenoid biosynthesis; dimethylallyl diphosphate biosynthesis; dimethylallyl diphosphate from (2E)-4-hydroxy-3-methylbutenyl diphosphate: step 1/1. It participates in isoprenoid biosynthesis; isopentenyl diphosphate biosynthesis via DXP pathway; isopentenyl diphosphate from 1-deoxy-D-xylulose 5-phosphate: step 6/6. In terms of biological role, catalyzes the conversion of 1-hydroxy-2-methyl-2-(E)-butenyl 4-diphosphate (HMBPP) into a mixture of isopentenyl diphosphate (IPP) and dimethylallyl diphosphate (DMAPP). Acts in the terminal step of the DOXP/MEP pathway for isoprenoid precursor biosynthesis. This is 4-hydroxy-3-methylbut-2-enyl diphosphate reductase 1 from Mycobacterium tuberculosis (strain CDC 1551 / Oshkosh).